Here is a 122-residue protein sequence, read N- to C-terminus: Large ribosomal subunit protein uL14 (122 aa).

Belongs to the universal ribosomal protein uL14 family. Part of the 50S ribosomal subunit. Forms a cluster with proteins L3 and L19. In the 70S ribosome, L14 and L19 interact and together make contacts with the 16S rRNA in bridges B5 and B8.

Functionally, binds to 23S rRNA. Forms part of two intersubunit bridges in the 70S ribosome. This is Large ribosomal subunit protein uL14 from Sulfurovum sp. (strain NBC37-1).